Here is a 494-residue protein sequence, read N- to C-terminus: Alpha-amylase-related protein (494 aa).

Positions 1 to 20 (MIKFALALTLCLAGASLSLA) are cleaved as a signal peptide. The residue at position 21 (Gln-21) is a Pyrrolidone carboxylic acid. Cys-48 and Cys-104 form a disulfide bridge. Residues Asn-118, Gln-169, and Asp-178 each contribute to the Ca(2+) site. Cys-157 and Cys-171 are oxidised to a cystine. Residue Arg-206 coordinates chloride. The Nucleophile role is filled by Asp-208. His-212 contacts Ca(2+). Glu-245 acts as the Proton donor in catalysis. Positions 308 and 343 each coordinate chloride. Disulfide bonds link Cys-376–Cys-382, Cys-418–Cys-441, and Cys-448–Cys-460.

This sequence belongs to the glycosyl hydrolase 13 family. In terms of assembly, monomer. Requires Ca(2+) as cofactor. Chloride is required as a cofactor.

It is found in the secreted. The enzyme catalyses Endohydrolysis of (1-&gt;4)-alpha-D-glucosidic linkages in polysaccharides containing three or more (1-&gt;4)-alpha-linked D-glucose units.. The protein is Alpha-amylase-related protein (Amyrel) of Drosophila lini (Fruit fly).